The chain runs to 308 residues: Homoserine kinase (308 aa).

An ATP-binding site is contributed by 85–95 (PLTRGLGSSAA).

Belongs to the GHMP kinase family. Homoserine kinase subfamily.

The protein resides in the cytoplasm. The catalysed reaction is L-homoserine + ATP = O-phospho-L-homoserine + ADP + H(+). The protein operates within amino-acid biosynthesis; L-threonine biosynthesis; L-threonine from L-aspartate: step 4/5. In terms of biological role, catalyzes the ATP-dependent phosphorylation of L-homoserine to L-homoserine phosphate. The protein is Homoserine kinase of Caldicellulosiruptor saccharolyticus (strain ATCC 43494 / DSM 8903 / Tp8T 6331).